A 257-amino-acid polypeptide reads, in one-letter code: Receptor expression-enhancing protein 4 (257 aa).

2 helical membrane-spanning segments follow: residues 1 to 21 and 42 to 62; these read MVSW…YPAY and WIVF…ISWF. Phosphoserine occurs at positions 152 and 194. A disordered region spans residues 177-257; it reads VPRRRPPIGY…KKAMPSDMDS (81 aa). Residue threonine 196 is modified to Phosphothreonine. Phosphoserine is present on residues serine 202 and serine 253.

The protein belongs to the DP1 family.

The protein localises to the endoplasmic reticulum membrane. Functionally, microtubule-binding protein required to ensure proper cell division and nuclear envelope reassembly by sequestering the endoplasmic reticulum away from chromosomes during mitosis. Probably acts by clearing the endoplasmic reticulum membrane from metaphase chromosomes. This Mus musculus (Mouse) protein is Receptor expression-enhancing protein 4 (Reep4).